The chain runs to 908 residues: Metabotropic glutamate receptor 8 (908 aa).

The N-terminal stretch at 1–33 is a signal peptide; sequence MVCEGKRSTSCPCFFLLTAKFYWILTMMQRTHS. At 34–583 the chain is on the extracellular side; the sequence is QEYAHSIRLD…IIKLEWHSPW (550 aa). Cys64 and Cys106 are disulfide-bonded. Residue Asn95 is glycosylated (N-linked (GlcNAc...) asparagine). Residues Ser156, 177 to 179, and Tyr227 each bind L-glutamate; that span reads AST. 7 disulfide bridges follow: Cys246–Cys534, Cys369–Cys384, Cys424–Cys431, Cys516–Cys535, Cys520–Cys538, Cys541–Cys553, and Cys556–Cys569. Asn298 carries an N-linked (GlcNAc...) asparagine glycan. Asp309 contributes to the L-glutamate binding site. L-glutamate is bound at residue Lys401. Asn452 and Asn480 each carry an N-linked (GlcNAc...) asparagine glycan. A glycan (N-linked (GlcNAc...) asparagine) is linked at Asn565. A helical membrane pass occupies residues 584–608; it reads AVVPVFIAILGIIATTFVIVTFVRY. Residues 609-620 are Cytoplasmic-facing; sequence NDTPIVRASGRE. Residues 621–641 form a helical membrane-spanning segment; the sequence is LSYVLLTGIFLCYSITFLMIA. The Extracellular portion of the chain corresponds to 642–647; sequence APDTII. The chain crosses the membrane as a helical span at residues 648-668; that stretch reads CSFRRIFLGLGMCFSYAALLT. The Cytoplasmic portion of the chain corresponds to 669 to 695; the sequence is KTNRIHRIFEQGKKSVTAPKFISPASQ. A helical transmembrane segment spans residues 696 to 716; it reads LVITFSLISVQLLGVFVWFVV. The Extracellular segment spans residues 717–746; the sequence is DPPHTIIDYGEQRTLDPENARGVLKCDISD. Residues 747–768 form a helical membrane-spanning segment; sequence LSLICSLGYSILLMVTCTVYAI. Topologically, residues 769 to 781 are cytoplasmic; the sequence is KTRGVPETFNEAK. A helical membrane pass occupies residues 782–803; sequence PIGFTMYTTCIIWLAFIPIFFG. The Extracellular portion of the chain corresponds to 804-818; that stretch reads TAQSAEKMYIQTTTL. Residues 819-843 traverse the membrane as a helical segment; the sequence is TVSMSLSASVSLGMLYMPKVYIIIF. Topologically, residues 844–908 are cytoplasmic; it reads HPEQNVQKRK…TYISYSNHSI (65 aa). Lys882 is covalently cross-linked (Glycyl lysine isopeptide (Lys-Gly) (interchain with G-Cter in SUMO1)).

Belongs to the G-protein coupled receptor 3 family. As to quaternary structure, interacts with PICK1. As to expression, strongly expressed in olfactory bulb, accessory olfactory bulb, and mammillary body. Weaker expression in the retina, and in scattered cells in the cortex and hindbrain.

The protein localises to the cell membrane. G-protein coupled receptor for glutamate. Ligand binding causes a conformation change that triggers signaling via guanine nucleotide-binding proteins (G proteins) and modulates the activity of down-stream effectors. Signaling inhibits adenylate cyclase activity. The protein is Metabotropic glutamate receptor 8 (Grm8) of Mus musculus (Mouse).